The following is a 282-amino-acid chain: Phospholipid phosphatase 1 (282 aa).

Residues 1-6 (MFDKPR) lie on the Cytoplasmic side of the membrane. A PDZ-binding; involved in localization to the apical cell membrane motif is present at residues 5-7 (PRL). Residues 7–27 (LPYVVLDVICVLLAGLPFIIL) traverse the membrane as a helical segment. Topologically, residues 28–53 (TSRHTPFQRGVFCTDESIKYPYREDT) are extracellular. The helical transmembrane segment at 54–74 (IPYALLGGIVIPFCIIVMITG) threads the bilayer. Residues 75-88 (ETLSVYFNVLHSNS) lie on the Cytoplasmic side of the membrane. Residues 89–109 (FVSNHYIATIYKAVGAFLFGA) form a helical membrane-spanning segment. The Extracellular segment spans residues 110–164 (SASQSLTDIAKYSIGRLRPHFLAVCNPDWSKINCSDGYIENFVCQGNEQKVREGR). Residues 120–128 (KYSIGRLRP) are phosphatase sequence motif I. The N-linked (GlcNAc...) asparagine glycan is linked to Asn-142. Residues 165 to 185 (LSFYSGHSSFSMYCMLFVALY) traverse the membrane as a helical segment. A phosphatase sequence motif II region spans residues 168 to 171 (YSGH). The active-site Proton donors is His-171. At 186–194 (LQARMKGDW) the chain is on the cytoplasmic side. A helical membrane pass occupies residues 195-215 (ARLLRPMLQFGLVALSIYVGL). Residues 216-227 (SRVSDYKHHWSD) form a phosphatase sequence motif III region. Over 216-229 (SRVSDYKHHWSDVL) the chain is Extracellular. The active-site Nucleophile is the His-223. Residues 230 to 250 (IGLIQGAVVAILVVLYVTDFF) traverse the membrane as a helical segment. Over 251–282 (KTTESNKERKEDSHTTLHETTNRQSYARNHEP) the chain is Cytoplasmic. The span at 257-271 (KERKEDSHTTLHETT) shows a compositional bias: basic and acidic residues. The segment at 257–282 (KERKEDSHTTLHETTNRQSYARNHEP) is disordered. Residues 272-282 (NRQSYARNHEP) are compositionally biased toward polar residues.

It belongs to the PA-phosphatase related phosphoesterase family. As to quaternary structure, forms functional homodimers and homooligomers that are not required for substrate recognition and catalytic activity. Can also form heterooligomers with PLPP2 and PLPP3. In terms of processing, N-glycosylated. N-linked sugars are of the complex type. N-glycosylation is not required for the phosphatase activity.

Its subcellular location is the cell membrane. The protein resides in the apical cell membrane. It localises to the membrane raft. The protein localises to the membrane. It is found in the caveola. The catalysed reaction is a 1,2-diacyl-sn-glycero-3-phosphate + H2O = a 1,2-diacyl-sn-glycerol + phosphate. It catalyses the reaction 1,2-dihexadecanoyl-sn-glycero-3-phosphate + H2O = 1,2-dihexadecanoyl-sn-glycerol + phosphate. It carries out the reaction 1,2-di-(9Z-octadecenoyl)-sn-glycero-3-phosphate + H2O = 1,2-di-(9Z-octadecenoyl)-sn-glycerol + phosphate. The enzyme catalyses a monoacyl-sn-glycero-3-phosphate + H2O = a monoacylglycerol + phosphate. The catalysed reaction is (9Z)-octadecenoyl-sn-glycero-3-phosphate + H2O = (9Z-octadecenoyl)-glycerol + phosphate. It catalyses the reaction a 1-acyl-sn-glycero-3-phosphate + H2O = a 1-acyl-sn-glycerol + phosphate. It carries out the reaction 1-(9Z-octadecenoyl)-sn-glycero-3-phosphate + H2O = 1-(9Z-octadecenoyl)-sn-glycerol + phosphate. The enzyme catalyses a 1,2-diacyl-sn-glycerol 3-diphosphate + H2O = a 1,2-diacyl-sn-glycero-3-phosphate + phosphate + H(+). The catalysed reaction is sphing-4-enine 1-phosphate + H2O = sphing-4-enine + phosphate. It catalyses the reaction an N-acylsphing-4-enine 1-phosphate + H2O = an N-acylsphing-4-enine + phosphate. It carries out the reaction N-(octanoyl)-sphing-4-enine-1-phosphate + H2O = N-octanoylsphing-4-enine + phosphate. The enzyme catalyses N-(9Z-octadecenoyl)-ethanolamine phosphate + H2O = N-(9Z-octadecenoyl) ethanolamine + phosphate. The catalysed reaction is 1-hexadecanoyl-2-(9Z-octadecenoyl)-sn-glycero-3-phosphate + H2O = 1-hexadecanoyl-2-(9Z-octadecenoyl)-sn-glycerol + phosphate. It participates in lipid metabolism; phospholipid metabolism. Its activity is regulated as follows. Magnesium-independent phospholipid phosphatase. Insensitive to N-ethylmaleimide. In terms of biological role, magnesium-independent phospholipid phosphatase of the plasma membrane that catalyzes the dephosphorylation of a variety of glycerolipid and sphingolipid phosphate esters including phosphatidate/PA, lysophosphatidate/LPA, diacylglycerol pyrophosphate/DGPP, sphingosine 1-phosphate/S1P and ceramide 1-phosphate/C1P. Also acts on N-oleoyl ethanolamine phosphate/N-(9Z-octadecenoyl)-ethanolamine phosphate, a potential physiological compound. Through its extracellular phosphatase activity allows both the hydrolysis and the cellular uptake of these bioactive lipid mediators from the milieu, regulating signal transduction in different cellular processes. It is for instance essential for the extracellular hydrolysis of S1P and subsequent conversion into intracellular S1P. Involved in the regulation of inflammation, platelets activation, cell proliferation and migration among other processes. May also have an intracellular activity to regulate phospholipid-mediated signaling pathways. The chain is Phospholipid phosphatase 1 from Rattus norvegicus (Rat).